A 494-amino-acid polypeptide reads, in one-letter code: AAA-ATPase At2g18190 (494 aa).

Residues 13–29 form a helical membrane-spanning segment; the sequence is SSLFTAYASLTGFLMLF. Position 251 to 258 (251 to 258) interacts with ATP; that stretch reads GPPGTGKS. The span at 459–470 shows a compositional bias: basic and acidic residues; the sequence is TCRKLDGDDKHN. Positions 459–494 are disordered; sequence TCRKLDGDDKHNVSSTNDLKKTKKKKKGGKGKAKGN. The segment covering 479–494 has biased composition (basic residues); the sequence is KTKKKKKGGKGKAKGN.

Belongs to the AAA ATPase family. BCS1 subfamily. Mg(2+) is required as a cofactor.

It localises to the membrane. The catalysed reaction is ATP + H2O = ADP + phosphate + H(+). This Arabidopsis thaliana (Mouse-ear cress) protein is AAA-ATPase At2g18190.